A 71-amino-acid chain; its full sequence is Small ribosomal subunit protein bS18 (71 aa).

Belongs to the bacterial ribosomal protein bS18 family. In terms of assembly, part of the 30S ribosomal subunit. Forms a tight heterodimer with protein bS6.

Binds as a heterodimer with protein bS6 to the central domain of the 16S rRNA, where it helps stabilize the platform of the 30S subunit. The chain is Small ribosomal subunit protein bS18 from Synechocystis sp. (strain ATCC 27184 / PCC 6803 / Kazusa).